The sequence spans 90 residues: Small ribosomal subunit protein bS16 (90 aa).

This sequence belongs to the bacterial ribosomal protein bS16 family.

The polypeptide is Small ribosomal subunit protein bS16 (Fervidobacterium nodosum (strain ATCC 35602 / DSM 5306 / Rt17-B1)).